The chain runs to 777 residues: Zinc finger FYVE domain-containing protein 1 (777 aa).

Residues 416-777 (MAHSSFFPDE…FNCNKKPGDL (362 aa)) form a required for localization in the lipid droplets region. FYVE-type zinc fingers lie at residues 598–659 (NSQI…DARN) and 715–775 (DHEI…KKPG). The Zn(2+) site is built by C604, C607, C620, C623, C628, C631, C651, C654, C721, C724, C737, C740, C745, C748, C767, and C770.

Interacts with RAB18 (in GTP-bound form). Interacts with BSCL2 in a RAB18-dependent manner. Interacts with ZW10. As to expression, ubiquitous.

It is found in the golgi apparatus. It localises to the golgi stack. The protein localises to the endoplasmic reticulum. The protein resides in the preautophagosomal structure. Its subcellular location is the lipid droplet. It is found in the mitochondrion. In terms of biological role, plays a role in the formation of lipid droplets (LDs) which are storage organelles at the center of lipid and energy homeostasis. Regulates the morphology, size and distribution of LDs. Mediates the formation of endoplasmic reticulum-lipid droplets (ER-LD) contact sites by forming a complex with RAB18 and ZW10. Binds to phosphatidylinositol 3-phosphate (PtdIns3P) through FYVE-type zinc finger. The chain is Zinc finger FYVE domain-containing protein 1 (Zfyve1) from Mus musculus (Mouse).